A 1864-amino-acid chain; its full sequence is Nestin (1864 aa).

Residue methionine 1 is modified to N-acetylmethionine. A head region spans residues 1-7; that stretch reads MEGCVGE. Positions 8–43 are coil 1A; sequence ESFQMWELNRRLEAYLTRVKTLEEQNQLLSAELGGL. Positions 8–314 constitute an IF rod domain; that stretch reads ESFQMWELNR…TLLEAENSRL (307 aa). The linker 1 stretch occupies residues 44 to 55; the sequence is RAQSGDASWRAR. A coil 1B region spans residues 56-151; the sequence is ADDELAALRV…ASHEEERAHL (96 aa). The interval 152–174 is linker 12; that stretch reads NAQAACTPRRPPAPAHASPIRAP. A coil 2A region spans residues 175 to 193; sequence EVEELARRLGEVWRGAVRD. The segment at 194-196 is linker 2; sequence YQE. Residues 197-314 form a coil 2B region; sequence RVAHMESSLG…TLLEAENSRL (118 aa). Serine 312 carries the phosphoserine modification. The tract at residues 315-1864 is tail; it reads QTPGRSSQAS…DGDSWSSGED (1550 aa). At threonine 316 the chain carries Phosphothreonine. Phosphoserine occurs at positions 356 and 359. The residue at position 389 (threonine 389) is a Phosphothreonine. Disordered stretches follow at residues 437-492, 515-625, and 680-845; these read GVLP…EEEG, EIQE…MSPE, and KEDQ…LDEN. Over residues 469–480 the composition is skewed to basic and acidic residues; the sequence is SILEAKDRESSE. A compositionally biased stretch (polar residues) spans 559–573; that stretch reads KENCNSSIEENSGTV. Residues serine 565 and serine 575 each carry the phosphoserine modification. Basic and acidic residues-rich tracts occupy residues 575–598 and 609–618; these read SPEK…EKTL and LGEEEPRMED. A phosphoserine mark is found at serine 623, serine 688, serine 731, serine 775, serine 841, serine 862, and serine 894. Basic and acidic residues-rich tracts occupy residues 680-690, 698-732, 742-776, and 786-843; these read KEDQRFPRSPE, PLEK…LKSP, LLEK…LKSP, and LLEK…RSLD. Basic and acidic residues-rich tracts occupy residues 916-925, 947-965, and 978-1012; these read ILGSLEDRNG, QRIV…RSPE, and LEGE…KSLE. The interval 916–1113 is disordered; that stretch reads ILGSLEDRNG…VKSSETENIE (198 aa). 3 positions are modified to phosphoserine: serine 963, serine 1010, and serine 1021. The segment covering 1065–1090 has biased composition (basic and acidic residues); sequence EKVDPELPKPLRNDQEVVRSLDKENQ. 2 positions are modified to phosphoserine: serine 1106 and serine 1127. 4 disordered regions span residues 1129–1158, 1175–1344, 1375–1722, and 1735–1807; these read DTQE…LGCV, LRSL…DSVE, EAIH…DDGL, and ETVS…GLEQ. Polar residues predominate over residues 1133 to 1143; sequence PLWSTEVTSET. A phosphoserine mark is found at serine 1177, serine 1188, and serine 1195. A compositionally biased stretch (basic and acidic residues) spans 1204–1213; sequence GPEREQHQES. Serine 1216 carries the phosphoserine modification. Residues 1254 to 1273 show a composition bias toward basic and acidic residues; sequence TEDKAELHLRGQGGEEKAVE. Phosphoserine is present on serine 1290. A compositionally biased stretch (basic and acidic residues) spans 1384 to 1405; sequence ESVKAKIDQGLEEPGKEPKEAG. Over residues 1429 to 1440 the composition is skewed to acidic residues; the sequence is ESGEGWGEEEAS. Over residues 1514–1527 the composition is skewed to basic and acidic residues; that stretch reads GRVEDEPEFGRGEI. Acidic residues predominate over residues 1532-1547; that stretch reads QDWEEGREDSEADELG. A phosphoserine mark is found at serine 1541 and serine 1565. Over residues 1612–1621 the composition is skewed to acidic residues; that stretch reads LSSEEFEDLG. Phosphoserine occurs at positions 1656 and 1665. Residues 1658–1680 show a composition bias toward acidic residues; that stretch reads GFADEEESGEEGEEEDADEEEGA. Basic and acidic residues predominate over residues 1703–1712; sequence QRGDLEHESV. 2 stretches are compositionally biased toward low complexity: residues 1713–1722 and 1741–1755; these read GDSGLWDDGL and SAEP…SASL. Phosphoserine is present on residues serine 1745 and serine 1747. A compositionally biased stretch (polar residues) spans 1788–1797; it reads QGPNLESEQV. Phosphoserine is present on residues serine 1837, serine 1860, and serine 1861. A disordered region spans residues 1841-1864; sequence LGPSQPLKFTLSGVDGDSWSSGED.

This sequence belongs to the intermediate filament family. As to quaternary structure, forms homodimers and homotetramers in vitro. In mixtures with other intermediate filament proteins such as vimentin and alpha-internexin, this protein preferentially forms heterodimers which can assemble to form intermediate filaments if nestin does not exceed 25%. Interacts with FHOD3. Constitutively phosphorylated. This increases during mitosis when the cytoplasmic intermediate filament network is reorganized.

In terms of biological role, required for brain and eye development. Promotes the disassembly of phosphorylated vimentin intermediate filaments (IF) during mitosis and may play a role in the trafficking and distribution of IF proteins and other cellular factors to daughter cells during progenitor cell division. Required for survival, renewal and mitogen-stimulated proliferation of neural progenitor cells. The protein is Nestin (Nes) of Mus musculus (Mouse).